The sequence spans 102 residues: UPF0473 protein SAS1551 (102 aa).

It belongs to the UPF0473 family.

The sequence is that of UPF0473 protein SAS1551 from Staphylococcus aureus (strain MSSA476).